A 359-amino-acid chain; its full sequence is Phosphoribosylformylglycinamidine cyclo-ligase (359 aa).

It belongs to the AIR synthase family.

It localises to the cytoplasm. It carries out the reaction 2-formamido-N(1)-(5-O-phospho-beta-D-ribosyl)acetamidine + ATP = 5-amino-1-(5-phospho-beta-D-ribosyl)imidazole + ADP + phosphate + H(+). It functions in the pathway purine metabolism; IMP biosynthesis via de novo pathway; 5-amino-1-(5-phospho-D-ribosyl)imidazole from N(2)-formyl-N(1)-(5-phospho-D-ribosyl)glycinamide: step 2/2. The chain is Phosphoribosylformylglycinamidine cyclo-ligase from Brucella canis (strain ATCC 23365 / NCTC 10854 / RM-666).